Reading from the N-terminus, the 710-residue chain is Exocyst complex component 5 (710 aa).

A coiled-coil region spans residues D44–F96.

It belongs to the SEC10 family. As to quaternary structure, the exocyst complex is composed of Sec3/Exoc1, Sec5/Exoc2, Sec6/Exoc3, Sec8/Exoc4, Sec10/Exoc5, Sec15/Exoc6, Exo70/Exoc7 and Exo84/Exoc8.

Functionally, component of the exocyst complex involved in the docking of exocytic vesicles with fusion sites on the plasma membrane. This Drosophila melanogaster (Fruit fly) protein is Exocyst complex component 5.